The following is a 70-amino-acid chain: uncharacterized protein (70 aa).

The C2H2-type zinc-finger motif lies at 21-43 (YECPICGEIYIKRKSMITHLRKH).

This is an uncharacterized protein from Saccharolobus islandicus (Sulfolobus islandicus).